The primary structure comprises 62 residues: Zinc metalloproteinase-disintegrin-like BaG (62 aa).

A Peptidase M12B domain is found at 24 to 54 (KTDLLNRSHDNAQLSPINLVVAVIMAHEMGH). N-linked (GlcNAc...) asparagine glycosylation occurs at Asn-29. Position 50 (His-50) interacts with Zn(2+). Glu-51 is a catalytic residue. His-54 contributes to the Zn(2+) binding site.

This sequence belongs to the venom metalloproteinase (M12B) family. P-III subfamily. P-IIIc sub-subfamily. Dimer. It depends on Zn(2+) as a cofactor. In terms of processing, the N-terminus is blocked. In terms of tissue distribution, expressed by the venom gland.

Its subcellular location is the secreted. With respect to regulation, inhibited by EDTA, and 1,10-phenanthroline. In terms of biological role, snake venom Zinc metalloproteinase that inhibits ADP-induced platelet aggregation and inhibits the alpha-5/beta-1 (ITGA5/ITGB1) integrin, a fibronectin receptor. Has caseinolytic activity. Induces the detachment of cells that are bound to fibronectin. In Bothrops alternatus (Urutu), this protein is Zinc metalloproteinase-disintegrin-like BaG.